The primary structure comprises 332 residues: Holliday junction branch migration complex subunit RuvB (332 aa).

The tract at residues M1–Y181 is large ATPase domain (RuvB-L). ATP contacts are provided by residues L20, R21, G62, K65, T66, T67, E128–F130, R171, Y181, and R218. Residue T66 participates in Mg(2+) binding. The small ATPAse domain (RuvB-S) stretch occupies residues Q182–D252. Positions R255–T332 are head domain (RuvB-H). 4 residues coordinate DNA: R291, R310, R312, and R315.

It belongs to the RuvB family. As to quaternary structure, homohexamer. Forms an RuvA(8)-RuvB(12)-Holliday junction (HJ) complex. HJ DNA is sandwiched between 2 RuvA tetramers; dsDNA enters through RuvA and exits via RuvB. An RuvB hexamer assembles on each DNA strand where it exits the tetramer. Each RuvB hexamer is contacted by two RuvA subunits (via domain III) on 2 adjacent RuvB subunits; this complex drives branch migration. In the full resolvosome a probable DNA-RuvA(4)-RuvB(12)-RuvC(2) complex forms which resolves the HJ.

The protein localises to the cytoplasm. It catalyses the reaction ATP + H2O = ADP + phosphate + H(+). Its function is as follows. The RuvA-RuvB-RuvC complex processes Holliday junction (HJ) DNA during genetic recombination and DNA repair, while the RuvA-RuvB complex plays an important role in the rescue of blocked DNA replication forks via replication fork reversal (RFR). RuvA specifically binds to HJ cruciform DNA, conferring on it an open structure. The RuvB hexamer acts as an ATP-dependent pump, pulling dsDNA into and through the RuvAB complex. RuvB forms 2 homohexamers on either side of HJ DNA bound by 1 or 2 RuvA tetramers; 4 subunits per hexamer contact DNA at a time. Coordinated motions by a converter formed by DNA-disengaged RuvB subunits stimulates ATP hydrolysis and nucleotide exchange. Immobilization of the converter enables RuvB to convert the ATP-contained energy into a lever motion, pulling 2 nucleotides of DNA out of the RuvA tetramer per ATP hydrolyzed, thus driving DNA branch migration. The RuvB motors rotate together with the DNA substrate, which together with the progressing nucleotide cycle form the mechanistic basis for DNA recombination by continuous HJ branch migration. Branch migration allows RuvC to scan DNA until it finds its consensus sequence, where it cleaves and resolves cruciform DNA. The protein is Holliday junction branch migration complex subunit RuvB of Streptococcus pyogenes serotype M3 (strain ATCC BAA-595 / MGAS315).